Here is a 537-residue protein sequence, read N- to C-terminus: Probable glucomannan 4-beta-mannosyltransferase 15 (537 aa).

Residues 50 to 70 (FIVPLFKCIVVMCLIISLLVF) form a helical membrane-spanning segment. D150 is a catalytic residue. D209 and D211 together coordinate substrate. D303 is an active-site residue. The next 4 membrane-spanning stretches (helical) occupy residues 382 to 402 (IVVHFFTYFFYCVILPTSVFL), 418 to 438 (VITLLSAIATPRSFYLVIFWV), 494 to 514 (EMMMGIYILCCACYDFAFGNA), and 515 to 535 (FLYLYLFMQATAFLISGVGFV).

Belongs to the glycosyltransferase 2 family. Plant cellulose synthase-like A subfamily.

The protein localises to the golgi apparatus membrane. The enzyme catalyses GDP-mannose + (glucomannan)n = GDP + (glucomannan)n+1.. Functionally, probable mannan synthase which consists of a 4-beta-mannosyltransferase activity on mannan using GDP-mannose. The beta-1,4-mannan product is the backbone for galactomannan synthesis by galactomannan galactosyltransferase. Galactomannan is a noncellulosic polysaccharides of plant cell wall. This is Probable glucomannan 4-beta-mannosyltransferase 15 from Arabidopsis thaliana (Mouse-ear cress).